The sequence spans 129 residues: Protein Wnt-6 (129 aa).

Intrachain disulfides connect Cys-3–Cys-17, Cys-5–Cys-12, Cys-75–Cys-106, Cys-91–Cys-101, and Cys-128–Cys-129. Ser-9 carries O-palmitoleoyl serine; by PORCN lipidation. Residue Asn-92 is glycosylated (N-linked (GlcNAc...) asparagine).

Belongs to the Wnt family. Palmitoleoylation is required for efficient binding to frizzled receptors. Depalmitoleoylation leads to Wnt signaling pathway inhibition. At tailbud: dorsal, punctate; in adult: brain and heart.

It localises to the secreted. The protein localises to the extracellular space. The protein resides in the extracellular matrix. Its function is as follows. Ligand for members of the frizzled family of seven transmembrane receptors. Probable developmental protein. May be a signaling molecule which affects the development of discrete regions of tissues. Is likely to signal over only few cell diameters. In Xenopus laevis (African clawed frog), this protein is Protein Wnt-6 (wnt6).